Here is a 180-residue protein sequence, read N- to C-terminus: Small ribosomal subunit protein eS10y (180 aa).

A disordered region spans residues 92 to 180; sequence LKKQQKPLGR…GGGAAGSDLP (89 aa). The span at 108–128 shows a compositional bias: basic and acidic residues; sequence DRPRGPPRGDGERRFGDRDGY. Over residues 152–180 the composition is skewed to gly residues; it reads FRGGAGGARQGFGRGAGGFGGGAAGSDLP.

This sequence belongs to the eukaryotic ribosomal protein eS10 family.

Its subcellular location is the cytoplasm. This Arabidopsis thaliana (Mouse-ear cress) protein is Small ribosomal subunit protein eS10y (RPS10B).